Consider the following 297-residue polypeptide: Homoserine kinase (297 aa).

84–94 (PLSKGFGSSAA) is a binding site for ATP.

This sequence belongs to the GHMP kinase family. Homoserine kinase subfamily.

It localises to the cytoplasm. It catalyses the reaction L-homoserine + ATP = O-phospho-L-homoserine + ADP + H(+). Its pathway is amino-acid biosynthesis; L-threonine biosynthesis; L-threonine from L-aspartate: step 4/5. Its function is as follows. Catalyzes the ATP-dependent phosphorylation of L-homoserine to L-homoserine phosphate. In Shouchella clausii (strain KSM-K16) (Alkalihalobacillus clausii), this protein is Homoserine kinase.